A 260-amino-acid chain; its full sequence is Carbonic anhydrase 3 (260 aa).

Ala-2 is subject to N-acetylalanine. The 257-residue stretch at 3–259 (KEWGYADHNG…IKGRIVKASF (257 aa)) folds into the Alpha-carbonic anhydrase domain. Ser-29, Ser-43, Ser-50, and Ser-55 each carry phosphoserine. The segment at 64 to 67 (KTCR) is involved in proton transfer. Phosphothreonine is present on Thr-73. The Zn(2+) site is built by His-94, His-96, and His-119. At Tyr-127 the chain carries Phosphotyrosine. Residues Cys-182 and Cys-187 each carry the S-glutathionyl cysteine modification. 198–199 (TT) is a substrate binding site. Thr-216 is subject to Phosphothreonine. Position 219 is a phosphoserine (Ser-219).

It belongs to the alpha-carbonic anhydrase family. Zn(2+) is required as a cofactor. Post-translationally, S-thiolated both by thiol-disulfide exchange with glutathione disulfide and by oxyradical-initiated S-thiolation with reduced glutathione. S-glutathionylated in hepatocytes under oxidative stress.

It is found in the cytoplasm. It carries out the reaction hydrogencarbonate + H(+) = CO2 + H2O. With respect to regulation, inhibited by acetazolamide. Its function is as follows. Reversible hydration of carbon dioxide. This is Carbonic anhydrase 3 (CA3) from Bos taurus (Bovine).